A 429-amino-acid polypeptide reads, in one-letter code: tRNA modification GTPase MnmE (429 aa).

Residues Arg-20, Glu-77, and Arg-117 each contribute to the (6S)-5-formyl-5,6,7,8-tetrahydrofolate site. Positions 213–353 constitute a TrmE-type G domain; that stretch reads GFEVAILGAP…LVKAVSHRLS (141 aa). Asn-223 lines the K(+) pocket. Residues 223 to 228, 242 to 248, and 267 to 270 each bind GTP; these read NVGKSS, SSIAGTT, and DTAG. A Mg(2+)-binding site is contributed by Ser-227. Ser-242, Ile-244, and Thr-247 together coordinate K(+). Position 248 (Thr-248) interacts with Mg(2+). Lys-429 is a binding site for (6S)-5-formyl-5,6,7,8-tetrahydrofolate.

This sequence belongs to the TRAFAC class TrmE-Era-EngA-EngB-Septin-like GTPase superfamily. TrmE GTPase family. In terms of assembly, homodimer. Heterotetramer of two MnmE and two MnmG subunits. Requires K(+) as cofactor.

It localises to the cytoplasm. In terms of biological role, exhibits a very high intrinsic GTPase hydrolysis rate. Involved in the addition of a carboxymethylaminomethyl (cmnm) group at the wobble position (U34) of certain tRNAs, forming tRNA-cmnm(5)s(2)U34. The sequence is that of tRNA modification GTPase MnmE from Dinoroseobacter shibae (strain DSM 16493 / NCIMB 14021 / DFL 12).